The following is a 206-amino-acid chain: Large ribosomal subunit protein eL13x (206 aa).

The interval 186 to 206 (NARHAGARAKRAAEAEKEEKK) is disordered. Residues 196-206 (RAAEAEKEEKK) show a composition bias toward basic and acidic residues.

The protein belongs to the eukaryotic ribosomal protein eL13 family.

The polypeptide is Large ribosomal subunit protein eL13x (RPL13D) (Arabidopsis thaliana (Mouse-ear cress)).